The following is a 398-amino-acid chain: Carbamoyl phosphate synthase small chain (398 aa).

The tract at residues 1 to 207 is CPSase; it reads MIQTISSSRP…KGYGTNNVHN (207 aa). S60, G257, and G259 together coordinate L-glutamine. Positions 209-397 constitute a Glutamine amidotransferase type-1 domain; it reads HIVAIDYGIK…CDLIMNHKKI (189 aa). C286 (nucleophile) is an active-site residue. Residues L287, Q290, N328, G330, and F331 each contribute to the L-glutamine site. Residues H370 and E372 contribute to the active site.

This sequence belongs to the CarA family. As to quaternary structure, composed of two chains; the small (or glutamine) chain promotes the hydrolysis of glutamine to ammonia, which is used by the large (or ammonia) chain to synthesize carbamoyl phosphate. Tetramer of heterodimers (alpha,beta)4.

It carries out the reaction hydrogencarbonate + L-glutamine + 2 ATP + H2O = carbamoyl phosphate + L-glutamate + 2 ADP + phosphate + 2 H(+). It catalyses the reaction L-glutamine + H2O = L-glutamate + NH4(+). It functions in the pathway amino-acid biosynthesis; L-arginine biosynthesis; carbamoyl phosphate from bicarbonate: step 1/1. The protein operates within pyrimidine metabolism; UMP biosynthesis via de novo pathway; (S)-dihydroorotate from bicarbonate: step 1/3. Small subunit of the glutamine-dependent carbamoyl phosphate synthetase (CPSase). CPSase catalyzes the formation of carbamoyl phosphate from the ammonia moiety of glutamine, carbonate, and phosphate donated by ATP, constituting the first step of 2 biosynthetic pathways, one leading to arginine and/or urea and the other to pyrimidine nucleotides. The small subunit (glutamine amidotransferase) binds and cleaves glutamine to supply the large subunit with the substrate ammonia. The sequence is that of Carbamoyl phosphate synthase small chain from Bartonella tribocorum (strain CIP 105476 / IBS 506).